We begin with the raw amino-acid sequence, 524 residues long: MKFNELNLSADLLAEIEKAGFVEASPIQEQTIPLALEGKDVIGQAQTGTGKTAAFGLPTLEKIRTEEATIQALVIAPTRELAVQSQEELFRFGRSKGVKVRSVYGGSSIEKQIKALKSGAHIVVGTPGRLLDLIKRKALKLQDIETLILDEADEMLNMGFLEDIEAIISRVPENRQTLLFSATMPDAIKRIGVQFMKAPEHVKIAAKELTTELVDQYYIRVKEQEKFDTMTRLMDVAQPELAIVFGRTKRRVDELTRGLKIRGFRAEGIHGDLDQNKRLRVLRDFKNGNLDVLVATDVAARGLDISGVTHVYNYDIPQDPESYVHRIGRTGRAGKSGQSITFVAPNEMGYLQIIENLTKKRMKGLKPASVEESFQSKKQVALKKIERDFADETIRANFEKFGKDARKLAAEFTPEELAMYILSLTVQDPDSLPEVEIAREKPLPFKPSGNGFGGKAKGGRGGRRGDDRRERDRRGNGRRDEFKKGSRGNDRFDKEKRYRKDNKKPRNTLSEKQTGFVIRNKGDK.

Residues 1-29 (MKFNELNLSADLLAEIEKAGFVEASPIQE) carry the Q motif motif. The Helicase ATP-binding domain maps to 32-202 (IPLALEGKDV…VQFMKAPEHV (171 aa)). 45-52 (AQTGTGKT) contacts ATP. A DEAD box motif is present at residues 150 to 153 (DEAD). Residues 213 to 373 (LVDQYYIRVK…GLKPASVEES (161 aa)) enclose the Helicase C-terminal domain. The interval 440–524 (EKPLPFKPSG…GFVIRNKGDK (85 aa)) is disordered. Basic and acidic residues predominate over residues 463-498 (RRGDDRRERDRRGNGRRDEFKKGSRGNDRFDKEKRY).

It belongs to the DEAD box helicase family. CshA subfamily. Oligomerizes, may be a member of the RNA degradosome.

The protein localises to the cytoplasm. It catalyses the reaction ATP + H2O = ADP + phosphate + H(+). In terms of biological role, DEAD-box RNA helicase possibly involved in RNA degradation. Unwinds dsRNA in both 5'- and 3'-directions, has RNA-dependent ATPase activity. This Streptococcus pneumoniae serotype 4 (strain ATCC BAA-334 / TIGR4) protein is DEAD-box ATP-dependent RNA helicase CshA.